Here is a 175-residue protein sequence, read N- to C-terminus: Major oleosin NAP-II (175 aa).

The interval 1 to 47 is polar; sequence RRDQYPRDRDQYSMIGRDRDKYSMIGRDRDQYNMYGRDYSKSRQIAK. 2 repeats span residues 17-26 and 27-36; these read RDRDKYSMIG and RDRDQYNMYG. Positions 48–119 are hydrophobic; sequence AVTAVTAGGS…AAITVFSWIY (72 aa). Transmembrane regions (helical) follow at residues 56-76, 78-98, and 99-119; these read GSLLVLSSLTLVGTVIALTVA, PLLVIFSPILVPALITVALLI, and TGFLSSGGFGIAAITVFSWIY. The disordered stretch occupies residues 151–175; the sequence is AQYYGQQQTGGEDDRDRTRGTQHTT.

This sequence belongs to the oleosin family.

It localises to the lipid droplet. Its subcellular location is the membrane. Functionally, may have a structural role to stabilize the lipid body during desiccation of the seed by preventing coalescence of the oil. Probably interacts with both lipid and phospholipid moieties of lipid bodies. May also provide recognition signals for specific lipase anchorage in lipolysis during seedling growth. This is Major oleosin NAP-II from Brassica napus (Rape).